Here is a 557-residue protein sequence, read N- to C-terminus: E3 ubiquitin-protein ligase rnf168 (557 aa).

The segment at 16–55 adopts an RING-type zinc-finger fold; that stretch reads CPICQEILLEPVTLPCKHTLCNPCFQMTVEKASLCCPFCR. The LR motif 1 motif lies at 112 to 130; it reads LCQPGEIRQEYEAEVSKIE. Residues 145 to 153 carry the UMI motif motif; the sequence is EDYIQKLLA. 2 consecutive short sequence motifs (MIU motif) follow at residues 170–193 and 422–445; these read MEEQ…VSNA and RRRQ…KELK. The LR motif 2 signature appears at 449–460; sequence RGKGSPDEYELR. The segment at 482-543 is disordered; it reads PLRKEIPVQD…GINVLKPINK (62 aa). Over residues 490–500 the composition is skewed to polar residues; the sequence is QDNSRNTQSEY. A compositionally biased stretch (basic residues) spans 508–521; it reads PSRKNSVRSARVRQ.

The protein belongs to the RNF168 family. As to quaternary structure, monomer.

Its subcellular location is the nucleus. It carries out the reaction S-ubiquitinyl-[E2 ubiquitin-conjugating enzyme]-L-cysteine + [acceptor protein]-L-lysine = [E2 ubiquitin-conjugating enzyme]-L-cysteine + N(6)-ubiquitinyl-[acceptor protein]-L-lysine.. Its pathway is protein modification; protein ubiquitination. E3 ubiquitin-protein ligase required for accumulation of repair proteins to sites of DNA damage. Acts with ube2n/ubc13 to amplify the rnf8-dependent histone ubiquitination. Recruited to sites of DNA damage at double-strand breaks (DSBs) by binding to ubiquitinated histone H2A and ubiquitinates histone H2A and H2AX, leading to amplify the rnf8-dependent H2A ubiquitination and promoting the formation of 'Lys-63'-linked ubiquitin conjugates. This leads to concentrate ubiquitinated histones H2A and H2AX at DNA lesions to the threshold required for recruitment of tp53bp1 and brca1. Catalyzes monoubiquitination of 'Lys-13' and 'Lys-15' of nucleosomal histone H2A (H2AK13Ub and H2AK15Ub, respectively). In Xenopus laevis (African clawed frog), this protein is E3 ubiquitin-protein ligase rnf168.